We begin with the raw amino-acid sequence, 287 residues long: MKPLASLRDIKTRINATKKTSQITKAMEMVSTSKLNRAEKREIVRPYMEKIQEVVAMSASAARSHPMLVSRPVKKTGYLVITSDRGLAGAYNSNVVRLVYPKRSKNAMLPPDEIAIIVIGRVGLSFFRKRNMPVILDITRLPDQPSFADIKEIARKTVGLFADGTFDELYMYYNHYVSAIQQEVTERKLLPLTDFLAENKQRTVYEFEPSQEEILDVLLPQYAESLIYGALLDAKASEHAARMTAMKNATDNANDVIRTLTLSYNRARQAAITQEITEIVAGRNALQ.

The protein belongs to the ATPase gamma chain family. In terms of assembly, F-type ATPases have 2 components, CF(1) - the catalytic core - and CF(0) - the membrane proton channel. CF(1) has five subunits: alpha(3), beta(3), gamma(1), delta(1), epsilon(1). CF(0) has three main subunits: a, b and c.

Its subcellular location is the cell membrane. Functionally, produces ATP from ADP in the presence of a proton gradient across the membrane. The gamma chain is believed to be important in regulating ATPase activity and the flow of protons through the CF(0) complex. This chain is ATP synthase gamma chain, found in Bacillus caldotenax.